The sequence spans 108 residues: uncharacterized protein (108 aa).

Basic and acidic residues-rich tracts occupy residues 1-15 and 53-69; these read MSEAKDNGSRDEVLV and KLKDRESHQENEDRNSE. Positions 1-77 are disordered; that stretch reads MSEAKDNGSR…SELDQDEEDK (77 aa).

This is an uncharacterized protein from Homo sapiens (Human).